Reading from the N-terminus, the 61-residue chain is Large ribosomal subunit protein uL30 (61 aa).

Belongs to the universal ribosomal protein uL30 family. Part of the 50S ribosomal subunit.

The sequence is that of Large ribosomal subunit protein uL30 from Methylococcus capsulatus (strain ATCC 33009 / NCIMB 11132 / Bath).